The chain runs to 301 residues: MKIGILSRNPELYSTRKLYEAAIIRGHQARIIDPLLCYMTIASQRPTIHYKGEELTGFDAIIPRIGASITFYGTAVVRQFEMMNIYSVNESVAISRSRDKLRSLQLLSRKGIGLPHTCFAHSTRYTKDLINQVGGAPLVVKLLEGTQGIGVVLAETQKAAESVIEAFKGLKEQILVQEFIEESGGADIRCLVVGGKVVAAMKRQGAEGEFRSNIHRGGKATVVRLTPEERATAVRSAHIMGLNVAGVDILQSNRGPIVMEVNSSPGLEGIETATGKDVADEIIRFIEKHTKPGRTKTRGKG.

An ATP-grasp domain is found at 104 to 287 (LQLLSRKGIG…VADEIIRFIE (184 aa)). Residues lysine 141, 178 to 179 (EF), aspartate 187, and 211 to 213 (RSN) each bind ATP. Positions 248, 260, and 262 each coordinate Mg(2+). Mn(2+) contacts are provided by aspartate 248, glutamate 260, and asparagine 262.

This sequence belongs to the RimK family. It depends on Mg(2+) as a cofactor. Mn(2+) is required as a cofactor.

The protein is Probable alpha-L-glutamate ligase of Syntrophotalea carbinolica (strain DSM 2380 / NBRC 103641 / GraBd1) (Pelobacter carbinolicus).